A 144-amino-acid chain; its full sequence is Mediator of RNA polymerase II transcription subunit 9 (144 aa).

Residues glutamine 85–glutamate 143 adopt a coiled-coil conformation.

It belongs to the Mediator complex subunit 9 family. As to quaternary structure, component of the Mediator complex.

It is found in the nucleus. Its function is as follows. Component of the Mediator complex, a coactivator involved in the regulated transcription of nearly all RNA polymerase II-dependent genes. Mediator functions as a bridge to convey information from gene-specific regulatory proteins to the basal RNA polymerase II transcription machinery. Mediator is recruited to promoters by direct interactions with regulatory proteins and serves as a scaffold for the assembly of a functional preinitiation complex with RNA polymerase II and the general transcription factors. This Drosophila melanogaster (Fruit fly) protein is Mediator of RNA polymerase II transcription subunit 9 (MED9).